A 156-amino-acid chain; its full sequence is Regulatory protein RecX (156 aa).

Belongs to the RecX family.

The protein localises to the cytoplasm. In terms of biological role, modulates RecA activity. This Pseudomonas putida (strain W619) protein is Regulatory protein RecX.